A 207-amino-acid chain; its full sequence is Anthranilate synthase component II (207 aa).

Residues 17–207 (RVLFVDNFDS…DVIRNFLAGL (191 aa)) enclose the Glutamine amidotransferase type-1 domain. 66 to 68 (GPG) is an L-glutamine binding site. The Nucleophile; for GATase activity role is filled by cysteine 96. 146–147 (SL) lines the L-glutamine pocket. Active-site residues include histidine 187 and glutamate 189.

In terms of assembly, tetramer of two components I and two components II.

It catalyses the reaction chorismate + L-glutamine = anthranilate + pyruvate + L-glutamate + H(+). Its pathway is amino-acid biosynthesis; L-tryptophan biosynthesis; L-tryptophan from chorismate: step 1/5. The polypeptide is Anthranilate synthase component II (trpG1) (Haloarcula marismortui (strain ATCC 43049 / DSM 3752 / JCM 8966 / VKM B-1809) (Halobacterium marismortui)).